A 377-amino-acid polypeptide reads, in one-letter code: MLDYLKIRRDLHQIPEIGLEEYKTHAYLMQVIEGLTADLDFVEIRTWRTGILVFIKGSSPYKTIGWRTDIDGLPIVEETGLDFASTHEGRMHACGHDMHMTVALGLLEQALSAQPNHNLLFLFQPAEENEAGGMLMYEDGAFGDWLPDEFYGLHVRPDLKVGDIATNRGTLFAGTCEVKLTFKGKGGHAAFPHEANDALIAASYFITQVQTIVSRNVDPIEGAVVTFGSLHAGTTNNVIAETAFLHGTIRTLTQEMNLLTQKRLREIAEGIAQSFDLELDLELKQGGYLPVENHPDLAGELMDFFQKEDGVELIDIAPAMTGEDFGYLLSKVKGVMFWMGVDSPYALHHPKMTPDEAALPFAIEKIGKFLDYKVNER.

Aspartate 69 is an active-site residue. The Proton acceptor role is filled by glutamate 128.

This sequence belongs to the peptidase M20A family. N-acetyldiaminopimelate deacetylase subfamily.

The catalysed reaction is N-acetyl-(2S,6S)-2,6-diaminopimelate + H2O = (2S,6S)-2,6-diaminopimelate + acetate. The protein operates within amino-acid biosynthesis; L-lysine biosynthesis via DAP pathway; LL-2,6-diaminopimelate from (S)-tetrahydrodipicolinate (acetylase route): step 3/3. Its function is as follows. Catalyzes the conversion of N-acetyl-diaminopimelate to diaminopimelate and acetate. This chain is N-acetyldiaminopimelate deacetylase, found in Streptococcus gordonii (strain Challis / ATCC 35105 / BCRC 15272 / CH1 / DL1 / V288).